The chain runs to 1228 residues: Membrane-anchored lipid-binding protein LAM1 (1228 aa).

Residues 1–1062 (MHEHKAELRL…IFKCFSKVNK (1062 aa)) are Cytoplasmic-facing. Positions 308–421 (EKGLSGWLYM…WINTLTSHKR (114 aa)) constitute a PH domain. Residues 773–978 (EAWCYFQDNF…KTREYLKKFN (206 aa)) enclose the VASt domain. Residues 1063–1083 (TLYYCLLISAVTNLFFVGKSI) traverse the membrane as a helical segment. Residues 1084–1228 (HSYFSVKSAE…EYNRLSAIPV (145 aa)) are Lumenal-facing. N-linked (GlcNAc...) asparagine glycosylation occurs at N1205.

It belongs to the SIP3 family.

It is found in the mitochondrion membrane. It localises to the endoplasmic reticulum membrane. In terms of biological role, involved in mitochondrial fragmentation during programmed cell death in response to high levels of alpha-factor mating pheromone or the drug amiodarone. May be involved in sterol transfer between intracellular membranes. In Saccharomyces cerevisiae (strain ATCC 204508 / S288c) (Baker's yeast), this protein is Membrane-anchored lipid-binding protein LAM1.